The chain runs to 319 residues: Homeobox protein Hox-B5a (319 aa).

Positions Ser-114–Pro-224 are disordered. Residues Arg-128–Ser-155 are compositionally biased toward low complexity. Positions Ile-226–Arg-231 match the Antp-type hexapeptide motif. Positions Gly-244 to Asn-303 form a DNA-binding region, homeobox.

This sequence belongs to the Antp homeobox family.

Its subcellular location is the nucleus. In terms of biological role, sequence-specific transcription factor which is part of a developmental regulatory system that provides cells with specific positional identities on the anterior-posterior axis. The sequence is that of Homeobox protein Hox-B5a (hoxb5a) from Takifugu rubripes (Japanese pufferfish).